The sequence spans 83 residues: MKVLILIIASVLLIGVECKDGYPMNSEGCKISCVIGNTFCDTECKMLKASSGYCWTLGLACYCEGLPENVEVWDSATNKCGGK.

The first 18 residues, 1-18 (MKVLILIIASVLLIGVEC), serve as a signal peptide directing secretion. Positions 19–81 (KDGYPMNSEG…VWDSATNKCG (63 aa)) constitute an LCN-type CS-alpha/beta domain. 4 disulfide bridges follow: Cys-29/Cys-80, Cys-33/Cys-54, Cys-40/Cys-61, and Cys-44/Cys-63. Residue Gly-81 is modified to Glycine amide. Residue Gly-82 is a propeptide.

Belongs to the long (4 C-C) scorpion toxin superfamily. Sodium channel inhibitor family. Beta subfamily. As to expression, expressed by the venom gland.

The protein resides in the secreted. Functionally, beta toxins bind voltage-independently at site-4 of sodium channels (Nav) and shift the voltage of activation toward more negative potentials thereby affecting sodium channel activation and promoting spontaneous and repetitive firing. Is possibly toxic to mice, freshwater shrimp and crickets. The chain is Beta-toxin Ct7 from Centruroides tecomanus (Scorpion).